A 176-amino-acid polypeptide reads, in one-letter code: Probable DNA-directed RNA polymerase subunit delta (176 aa).

The HTH HARE-type domain occupies 14 to 81; that stretch reads LSLIDVAHFI…GNNMWGLRAW (68 aa). Disordered stretches follow at residues 91-119 and 140-176; these read VQTQ…VDYD and DEDE…PEDK. Composition is skewed to acidic residues over residues 105–119 and 159–176; these read DDDD…VDYD and TVED…PEDK.

It belongs to the RpoE family. As to quaternary structure, RNAP is composed of a core of 2 alpha, a beta and a beta' subunits. The core is associated with a delta subunit and one of several sigma factors.

Functionally, participates in both the initiation and recycling phases of transcription. In the presence of the delta subunit, RNAP displays an increased specificity of transcription, a decreased affinity for nucleic acids, and an increased efficiency of RNA synthesis because of enhanced recycling. This is Probable DNA-directed RNA polymerase subunit delta from Listeria welshimeri serovar 6b (strain ATCC 35897 / DSM 20650 / CCUG 15529 / CIP 8149 / NCTC 11857 / SLCC 5334 / V8).